Reading from the N-terminus, the 159-residue chain is MINYLKSFFLYEIVRGMALTLKYFFKPKVTINYPYEKSPISPRFKGEHALRRYEHGEERCIACKLCEAICPAQAIVIEADEREDGSRRTTRYDIDMTKCIYCGLCQEACPVDAIVEGPNFEFASLTHTALIYDKERLLQNGDRWEQALASKLHKDYEYR.

2 consecutive 4Fe-4S ferredoxin-type domains span residues 51 to 80 (RRYE…IEAD) and 90 to 119 (TRYD…EGPN). Cys60, Cys63, Cys66, Cys70, Cys99, Cys102, Cys105, and Cys109 together coordinate [4Fe-4S] cluster.

Belongs to the complex I 23 kDa subunit family. As to quaternary structure, NDH-1 is composed of 14 different subunits. Subunits NuoA, H, J, K, L, M, N constitute the membrane sector of the complex. The cofactor is [4Fe-4S] cluster.

The protein localises to the cell inner membrane. The enzyme catalyses a quinone + NADH + 5 H(+)(in) = a quinol + NAD(+) + 4 H(+)(out). NDH-1 shuttles electrons from NADH, via FMN and iron-sulfur (Fe-S) centers, to quinones in the respiratory chain. The immediate electron acceptor for the enzyme in this species is believed to be ubiquinone. Couples the redox reaction to proton translocation (for every two electrons transferred, four hydrogen ions are translocated across the cytoplasmic membrane), and thus conserves the redox energy in a proton gradient. The chain is NADH-quinone oxidoreductase subunit I from Rickettsia rickettsii (strain Sheila Smith).